We begin with the raw amino-acid sequence, 251 residues long: uncharacterized protein (251 aa).

This sequence belongs to the FAM243 family.

This is an uncharacterized protein from Bos taurus (Bovine).